The sequence spans 314 residues: Methionyl-tRNA formyltransferase (314 aa).

Position 112-115 (112-115 (SLLP)) interacts with (6S)-5,6,7,8-tetrahydrofolate.

Belongs to the Fmt family.

It carries out the reaction L-methionyl-tRNA(fMet) + (6R)-10-formyltetrahydrofolate = N-formyl-L-methionyl-tRNA(fMet) + (6S)-5,6,7,8-tetrahydrofolate + H(+). Functionally, attaches a formyl group to the free amino group of methionyl-tRNA(fMet). The formyl group appears to play a dual role in the initiator identity of N-formylmethionyl-tRNA by promoting its recognition by IF2 and preventing the misappropriation of this tRNA by the elongation apparatus. The polypeptide is Methionyl-tRNA formyltransferase (Tolumonas auensis (strain DSM 9187 / NBRC 110442 / TA 4)).